The following is a 644-amino-acid chain: Zinc transporter ZIP4 (644 aa).

A signal peptide spans 1-27 (MAILAWLEPRPLLAVLVLVLTMRMAQP). Over 28–323 (AHLLTLLSSG…QNQLSQAEKY (296 aa)) the chain is Extracellular. Intrachain disulfides connect C59/C64, C67/C103, and C153/C188. The disordered stretch occupies residues 231–259 (TETHSDHHHQEKRVNRQGPTPLTAPNSSS). The span at 233–244 (THSDHHHQEKRV) shows a compositional bias: basic and acidic residues. Residues 247 to 259 (QGPTPLTAPNSSS) are compositionally biased toward polar residues. A disulfide bond links C266 and C305. A helical transmembrane segment spans residues 324-344 (LYGSLATLLICLCSTFGLLLL). Topologically, residues 345 to 355 (TCAACSTAAHY) are cytoplasmic. Residues 356-376 (VIQTFLGMAVGALTGDALLHL) form a helical membrane-spanning segment. Over 377–404 (TPKVLGLHQHGGDSEHRADSHGPQTTWR) the chain is Extracellular. The chain crosses the membrane as a helical span at residues 405 to 425 (LVVALSGLYVFFLFEKLCDLL). Topologically, residues 426–495 (LPQDPEDRKG…KSPELRLLPY (70 aa)) are cytoplasmic. The short motif at 449-451 (LQL) is the Essential for SLC39A4 endocytosis element. Residues 456 to 467 (LRPPKQPHEGSR) are compositionally biased toward basic and acidic residues. The tract at residues 456–484 (LRPPKQPHEGSRADLVAEESPELLSPEPR) is disordered. Residues 496-515 (MITLGDGLHNFADGLAVGAA) form a helical membrane-spanning segment. Residues H504, N505, and D508 each coordinate Zn(2+). Over 516-523 (FASSWKTG) the chain is Extracellular. A helical transmembrane segment spans residues 524-550 (LATSLAVFCHEVPHELGDFAALLHAGL). Residues H533, E534, and H537 each contribute to the Zn(2+) site. At 551-555 (PVSRA) the chain is on the cytoplasmic side. The chain crosses the membrane as a helical span at residues 556 to 576 (LLLNLASGLTAFAGLYVALAL). The Extracellular portion of the chain corresponds to 577–583 (GVGEESE). A helical membrane pass occupies residues 584-604 (SWTLAVAIGLFLYVALCDMLP). Residues 605–614 (AMLNVRDPRP) are Cytoplasmic-facing. The chain crosses the membrane as a helical span at residues 615-635 (WLLFLLHNVGLLGGWAVLLLL). Over 636 to 644 (SLYEDSIAL) the chain is Extracellular.

This sequence belongs to the ZIP transporter (TC 2.A.5) family. Homodimer. Post-translationally, the extracellular N-terminal ectodomain is cleaved when cells are Zn(2+) deficient, N-terminally cleaved SLC39A4 is internalized at a faster rate. Under excess Zn(2+) conditions, SLC39A4 on the cell surface is rapidly endocytosed, ubiquitinated and degraded. In terms of processing, glycosylated.

Its subcellular location is the cell membrane. The protein resides in the recycling endosome membrane. It localises to the apical cell membrane. The catalysed reaction is Zn(2+)(in) = Zn(2+)(out). Its function is as follows. Selective transporter that mediates the uptake of Zn(2+). Plays an essential role for dietary zinc uptake from small intestine. The Zn(2+) uniporter activity is regulated by zinc availability. Also exhibits polyspecific binding and transport of Cu(2+), Cd(2+) and possibly Ni(2+) but at higher concentrations. The polypeptide is Zinc transporter ZIP4 (Pteropus alecto (Black flying fox)).